Reading from the N-terminus, the 265-residue chain is MKKLAFAITATSGAAAFLTHHDAQASTQHTVQSGESLWSIAQKYNTSVESIKQNNQLDNNLVFPGQVISVGGSDAQNTSNTSPQAGSASSHTVQAGESLNIIASRYGVSVDQLMAANNLRGYLIMPNQTLQIPNGGSGGTTPTATTGSNGNASSFNHQNLYTAGQCTWYVFDRRAQAGSPISTYWSDAKYWAGNAANDGYQVNNTPSVGSIMQSTPGPYGHVAYVERVNGDGSILISEMNYTYGPYNMNYRTIPASEVSSYAFIH.

A signal peptide spans 1–25 (MKKLAFAITATSGAAAFLTHHDAQA). 2 LysM domains span residues 27–70 (TQHT…VISV) and 89–132 (SSHT…TLQI). Residues 72–92 (GSDAQNTSNTSPQAGSASSHT) form a disordered region. Over residues 74–92 (DAQNTSNTSPQAGSASSHT) the composition is skewed to polar residues. Positions 141–265 (TPTATTGSNG…SEVSSYAFIH (125 aa)) constitute a Peptidase C51 domain.

It catalyses the reaction Hydrolyzes the link between N-acetylmuramoyl residues and L-amino acid residues in certain cell-wall glycopeptides.. Functionally, has weak lytic activity toward S.aureus cells. The chain is Probable autolysin SsaALP from Staphylococcus aureus (strain NCTC 8325 / PS 47).